A 219-amino-acid polypeptide reads, in one-letter code: N-(5'-phosphoribosyl)anthranilate isomerase (219 aa).

The protein belongs to the TrpF family.

It carries out the reaction N-(5-phospho-beta-D-ribosyl)anthranilate = 1-(2-carboxyphenylamino)-1-deoxy-D-ribulose 5-phosphate. The protein operates within amino-acid biosynthesis; L-tryptophan biosynthesis; L-tryptophan from chorismate: step 3/5. This Bradyrhizobium sp. (strain BTAi1 / ATCC BAA-1182) protein is N-(5'-phosphoribosyl)anthranilate isomerase.